Consider the following 339-residue polypeptide: Replication factor C subunit 5 (339 aa).

59–66 (GPPGTGKT) contributes to the ATP binding site.

This sequence belongs to the activator 1 small subunits family. As to quaternary structure, subunit of the RFC complex, an heteropentameric complex consisting of a large subunit RFC1 and four small subunits RFC2, RFC3, RFC4 and RFC5; the RFC complex interacts with PCNA. Forms an heterotetrameric complex with RFC2, RFC3 and RFC4; this complex has ATPase activity but is not stimulated by PCNA. The heterotetramer of subunits RFC2, RFC3, RFC4 and RFC5 interacts with RAD17.

The protein localises to the nucleus. Functionally, subunit of the replication factor C (RFC) complex which acts during elongation of primed DNA templates by DNA polymerases delta and epsilon, and is necessary for ATP-dependent loading of proliferating cell nuclear antigen (PCNA) onto primed DNA. The sequence is that of Replication factor C subunit 5 (Rfc5) from Mus musculus (Mouse).